The chain runs to 220 residues: Uracil-DNA glycosylase (220 aa).

The active-site Proton acceptor is aspartate 61.

This sequence belongs to the uracil-DNA glycosylase (UDG) superfamily. UNG family.

It is found in the cytoplasm. The enzyme catalyses Hydrolyzes single-stranded DNA or mismatched double-stranded DNA and polynucleotides, releasing free uracil.. Its function is as follows. Excises uracil residues from the DNA which can arise as a result of misincorporation of dUMP residues by DNA polymerase or due to deamination of cytosine. The chain is Uracil-DNA glycosylase from Pseudoalteromonas translucida (strain TAC 125).